We begin with the raw amino-acid sequence, 1131 residues long: cGMP-specific 3',5'-cyclic phosphodiesterase (1131 aa).

Disordered stretches follow at residues 1-26 (MTDV…SAAT) and 42-150 (GVAP…SQQD). A compositionally biased stretch (low complexity) spans 42–63 (GVAPGAVPGPGSAAIPASSSSG). Positions 75–86 (SNNNRPAATNRS) are enriched in polar residues. Positions 110–136 (SSSTPSQSPSPSQSPSQASIQTQTSQQ) are enriched in low complexity. 2 consecutive GAF domains span residues 255–412 (DIDV…GIGI) and 444–625 (NLEC…GLGI). The 324-residue stretch at 655-978 (SQDQTEKLTQ…RNWQDLAEKV (324 aa)) folds into the PDEase domain. H731 (proton donor) is an active-site residue. The a divalent metal cation site is built by H735, H771, D772, and D882. Disordered regions lie at residues 1019-1048 (QQSQ…TGAL) and 1078-1131 (SHVS…CALL). Basic and acidic residues-rich tracts occupy residues 1024–1035 (GSEDSHTPEHQR) and 1078–1088 (SHVSEDMDDKS). Residues 1097–1117 (ASGSMGRMSASSSTSSAGGQM) are compositionally biased toward low complexity. The segment covering 1121–1131 (SKKRSKLCALL) has biased composition (basic residues). C1128 carries the post-translational modification Cysteine methyl ester. C1128 carries S-farnesyl cysteine lipidation. Residues 1129-1131 (ALL) constitute a propeptide, removed in mature form.

Belongs to the cyclic nucleotide phosphodiesterase family. Interacts with PrBP. A divalent metal cation is required as a cofactor.

It localises to the cell membrane. It catalyses the reaction 3',5'-cyclic GMP + H2O = GMP + H(+). Functionally, has a role regulating cGMP transport in Malpighian tubule principal cells. This Drosophila erecta (Fruit fly) protein is cGMP-specific 3',5'-cyclic phosphodiesterase.